Consider the following 275-residue polypeptide: MPSNICKFFLTWWLIQQVTGLTGPLMLDTAPNAFDDQYEGCVNKMEEKAPLLLKEDFNKSEKLKVAWEEAKKRWNNIKPSMSYPKGFNDFHGTALVAYTGSIGVDFNRAVREFKENPGQFHYKAFHYYLTRALQLLSNGDCHSVYRGTKTRFHYTGAGSVRFGQFTSSSLSKTVAQSPEFFSDDGTLFIIKTCLGVYIKEFSFYPDQEEVLIPGYEVYQKVRTQGYNEIFLDSPKRKKSNYNCLYSSAGTRESCVSLFLVVLTSLLVQLLCLAEP.

The first 20 residues, 1–20 (MPSNICKFFLTWWLIQQVTG), serve as a signal peptide directing secretion. 2 disulfide bridges follow: C41–C243 and C141–C193. Residue N58 is glycosylated (N-linked (GlcNAc...) asparagine). In terms of domain architecture, TR mART core spans 61 to 238 (EKLKVAWEEA…IFLDSPKRKK (178 aa)). Residues Y98, R146, and Q164 each coordinate NAD(+). The active site involves R146. Residue S167 is part of the active site. An NAD(+)-binding site is contributed by S202. Residue E209 is part of the active site. S246 carries the GPI-anchor amidated serine lipid modification. Positions 247 to 275 (SAGTRESCVSLFLVVLTSLLVQLLCLAEP) are cleaved as a propeptide — removed in mature form.

Belongs to the Arg-specific ADP-ribosyltransferase family. Postthymic T-cells.

The protein resides in the cell membrane. The enzyme catalyses L-arginyl-[protein] + NAD(+) = N(omega)-(ADP-D-ribosyl)-L-arginyl-[protein] + nicotinamide + H(+). It carries out the reaction NAD(+) + H2O = ADP-D-ribose + nicotinamide + H(+). Has NAD(+) glycohydrolase activity and extremely low ADP-ribosyltransferase activity. The polypeptide is T-cell ecto-ADP-ribosyltransferase 1 (Art2a) (Rattus norvegicus (Rat)).